Consider the following 119-residue polypeptide: MSTSSRALAAYRNALRATKVAFGEDVRMLVAARKAMRHGMLAPDASLPVEDQITHMNDIATFLRRNLVQGKKVSGKDDVYQLRIHEETELGDNATIKETKTTLASQGGGCCGGGKDLYK.

The transit peptide at 1-15 directs the protein to the mitochondrion; the sequence is MSTSSRALAAYRNAL.

This sequence belongs to the complex I LYR family. MZM1 subfamily. Interacts with RIP1.

It localises to the mitochondrion matrix. Functionally, assembly factor required for Rieske Fe-S protein RIP1 incorporation into the cytochrome b-c1 (CIII) complex. Functions as a chaperone, binding to this subunit within the mitochondrial matrix and stabilizing it prior to its translocation and insertion into the late CIII dimeric intermediate within the mitochondrial inner membrane. Modulates the mitochondrial matrix zinc pool. This is Mitochondrial zinc maintenance protein 1, mitochondrial (MZM1) from Eremothecium gossypii (strain ATCC 10895 / CBS 109.51 / FGSC 9923 / NRRL Y-1056) (Yeast).